Here is a 117-residue protein sequence, read N- to C-terminus: Large ribosomal subunit protein bL19 (117 aa).

The protein belongs to the bacterial ribosomal protein bL19 family.

Functionally, this protein is located at the 30S-50S ribosomal subunit interface and may play a role in the structure and function of the aminoacyl-tRNA binding site. This is Large ribosomal subunit protein bL19 from Leptothrix cholodnii (strain ATCC 51168 / LMG 8142 / SP-6) (Leptothrix discophora (strain SP-6)).